The chain runs to 656 residues: Acyl-CoA-binding domain-containing protein 6 (656 aa).

The ACB domain occupies 8–102 (YPDRFYAAAA…LEEEDPGWYS (95 aa)). An acyl-CoA contacts are provided by residues 44–48 (YGLYQ) and lysine 70. The tract at residues 129-148 (ASTNGTSVPEPKTISENGSS) is disordered. Kelch repeat units lie at residues 194-241 (KMYI…AQVS), 254-304 (KFFS…LVGT), 305-354 (TLVL…CHAD), 356-405 (YLLI…TVGE), 406-454 (NWYI…LVHS), and 461-507 (YLIS…EPEV). Residues 527–636 (LKKDDANELL…EQAALEAKQR (110 aa)) are a coiled coil. Residues 627-656 (EQAALEAKQRQSSSGMWGWLVGTPPDKSES) are disordered.

The protein belongs to the ACBP family. In terms of tissue distribution, highly expressed in leaves. Expressed in roots and seeds.

Its subcellular location is the peroxisome. Functionally, binds medium- and long-chain acyl-CoA esters with high affinity. Can interact in vitro with linoleoyl-CoA and linolenoyl-CoA. Binds phosphatidic acid (PA) and phosphatidylcholine (PC) in vitro. May play a role in the biosynthesis of phospholipids. May be involved in lipid degradation via peroxisomal beta-oxydation. This chain is Acyl-CoA-binding domain-containing protein 6, found in Oryza sativa subsp. japonica (Rice).